Consider the following 271-residue polypeptide: TIP41-like protein (271 aa).

The residue at position 106 (lysine 106) is an N6-acetyllysine. The interval 173–271 (RVMPSSFFLL…PVDSESAPSE (99 aa)) is interaction with PPP2CA. Serine 265 and serine 270 each carry phosphoserine.

Belongs to the TIP41 family. As to quaternary structure, interacts with PPP2CA. Interacts with PPP2CB, PPP4C and PPP6C. Interacts with IGBP1; the interaction is dependent on PPP2CA. Associates with a protein phosphatase 2A PP2A(C):IGBP1 complex. Interacts with PPP4C and PPP4R2.

Its subcellular location is the cytoplasm. Its function is as follows. May be a allosteric regulator of serine/threonine-protein phosphatase 2A (PP2A). Inhibits catalytic activity of the PP2A(D) core complex in vitro. The PP2A(C):TIPRL complex does not show phosphatase activity. Acts as a negative regulator of serine/threonine-protein phosphatase 4 probably by inhibiting the formation of the active PPP4C:PPP4R2 complex; the function is proposed to implicate it in DNA damage response by promoting H2AX phosphorylated on Ser-140 (gamma-H2AX). May play a role in the regulation of ATM/ATR signaling pathway controlling DNA replication and repair. The polypeptide is TIP41-like protein (Tiprl) (Rattus norvegicus (Rat)).